The primary structure comprises 356 residues: Chorismate synthase (356 aa).

Residues R44 and R49 each coordinate NADP(+). FMN contacts are provided by residues 121–123 (HFS), G278, 293–297 (KPTPS), and R320.

It belongs to the chorismate synthase family. The cofactor is FMNH2.

It catalyses the reaction 5-O-(1-carboxyvinyl)-3-phosphoshikimate = chorismate + phosphate. The protein operates within metabolic intermediate biosynthesis; chorismate biosynthesis; chorismate from D-erythrose 4-phosphate and phosphoenolpyruvate: step 7/7. Catalyzes the anti-1,4-elimination of the C-3 phosphate and the C-6 proR hydrogen from 5-enolpyruvylshikimate-3-phosphate (EPSP) to yield chorismate, which is the branch point compound that serves as the starting substrate for the three terminal pathways of aromatic amino acid biosynthesis. This reaction introduces a second double bond into the aromatic ring system. The chain is Chorismate synthase from Thermococcus gammatolerans (strain DSM 15229 / JCM 11827 / EJ3).